The chain runs to 591 residues: ESX-1 secretion system protein EccCb1 (591 aa).

FtsK domains are found at residues 65–259 (LQDV…NETQ) and 359–545 (LTPA…EKQE). Residues 84–91 (GAPQTGKS) and 376–383 (GAAKSGKT) contribute to the ATP site.

Part of the ESX-1 / type VII secretion system (T7SS), which is composed of cytosolic and membrane components. The ESX-1 membrane complex is composed of EccB1, EccCa1, EccCb1, EccD1 and EccE1. Interacts with EccCa1, EspK and the C-terminus of EsxB. Residues 1-261 interact with EsxB and an artificial EsxB-EsxA heterodimer.

Its subcellular location is the cytoplasm. EsxB binding to the second FtsK domain of EccCb1 causes multimerization; a subsequent unknown step relieves the allosteric inhibition of linker 2 on FtsK domain 1 (in EccCa1 subunit), activating the ATPase activity. Its function is as follows. Part of the ESX-1 specialized secretion system, which delivers several virulence factors to host cells during infection, including the key virulence factors EsxA (ESAT-6) and EsxB (CFP-10). EccCb1 may link the cytosolic components of the system with the membrane components. This chain is ESX-1 secretion system protein EccCb1, found in Mycobacterium tuberculosis (strain ATCC 25618 / H37Rv).